The following is a 196-amino-acid chain: 3-isopropylmalate dehydratase small subunit (196 aa).

This sequence belongs to the LeuD family. LeuD type 1 subfamily. Heterodimer of LeuC and LeuD.

The catalysed reaction is (2R,3S)-3-isopropylmalate = (2S)-2-isopropylmalate. It participates in amino-acid biosynthesis; L-leucine biosynthesis; L-leucine from 3-methyl-2-oxobutanoate: step 2/4. In terms of biological role, catalyzes the isomerization between 2-isopropylmalate and 3-isopropylmalate, via the formation of 2-isopropylmaleate. In Streptococcus thermophilus (strain CNRZ 1066), this protein is 3-isopropylmalate dehydratase small subunit.